Reading from the N-terminus, the 141-residue chain is Protein MGF 100-2L (141 aa).

Belongs to the asfivirus MGF 100 family.

Its function is as follows. Plays a role in virus cell tropism, and may be required for efficient virus replication in macrophages. This is Protein MGF 100-2L from African swine fever virus (strain Badajoz 1971 Vero-adapted) (Ba71V).